The chain runs to 389 residues: Lipid-A-disaccharide synthase (389 aa).

This sequence belongs to the LpxB family.

It catalyses the reaction a lipid X + a UDP-2-N,3-O-bis[(3R)-3-hydroxyacyl]-alpha-D-glucosamine = a lipid A disaccharide + UDP + H(+). It functions in the pathway bacterial outer membrane biogenesis; LPS lipid A biosynthesis. In terms of biological role, condensation of UDP-2,3-diacylglucosamine and 2,3-diacylglucosamine-1-phosphate to form lipid A disaccharide, a precursor of lipid A, a phosphorylated glycolipid that anchors the lipopolysaccharide to the outer membrane of the cell. The polypeptide is Lipid-A-disaccharide synthase (Burkholderia ambifaria (strain MC40-6)).